We begin with the raw amino-acid sequence, 495 residues long: Oxidoreductase AflY (495 aa).

The segment at 1 to 22 (MGSHAPAVAGKPDPKKGPYQAT) is disordered.

It belongs to the questin oxidase family.

Its pathway is mycotoxin biosynthesis; aflatoxin biosynthesis. Its function is as follows. Oxidoreductase; part of the gene cluster that mediates the biosynthesis of aflatoxins, a group of polyketide-derived furanocoumarins, and part of the most toxic and carcinogenic compounds among the known mycotoxins. The four major aflatoxins produced by A.parasiticus are aflatoxin B1 (AFB1), aflatoxin B2 (AFB2), aflatoxin G1 (AFG1) and aflatoxin G2 (AFG2). Within the aflatoxin pathway, the oxidoreductase aflY seems to be involved in the conversion of versicolorin A (VERA) to demethylsterigmatocystin (DMST), through probable Baeyer-Villiger oxidation required for the formation of the xanthone ring. The biosynthesis of aflatoxins begins with the norsolorinic acid synthase aflC that combines a hexanoyl starter unit produced by the fatty acid synthase aflA/aflB and 7 malonyl-CoA extender units to synthesize the precursor NOR. The second step is the conversion of NOR to averantin and requires the norsolorinic acid ketoreductase aflD, which catalyzes the dehydration of norsolorinic acid to form (1'S)-averantin. The norsolorinic acid reductases aflE and aflF may also play a role in the conversion of NOR to AVN. The cytochrome P450 monooxygenase aflG then catalyzes the hydroxylation of AVN to 5'hydroxyaverantin (HAVN). The next step is performed by the 5'-hydroxyaverantin dehydrogenase aflH that transforms HAVN to 5'-oxoaverantin (OAVN) which is further converted to averufin (AVF) by aflK that plays a dual role in the pathway, as a 5'-oxoaverantin cyclase that mediates conversion of 5'-oxoaverantin, as well as a versicolorin B synthase in a later step in the pathway. The averufin oxidase aflI catalyzes the conversion of AVF to versiconal hemiacetal acetate (VHA). VHA is then the substrate for the versiconal hemiacetal acetate esterase aflJ to yield versiconal (VAL). Versicolorin B synthase aflK then converts VAL to versicolorin B (VERB) by closing the bisfuran ring of aflatoxin which is required for DNA-binding, thus giving to aflatoxin its activity as a mutagen. Then, the activity of the versicolorin B desaturase aflL leads to versicolorin A (VERA). A branch point starts from VERB since it can also be converted to dihydrodemethylsterigmatocystin (DMDHST), probably also by aflL, VERA being a precursor for aflatoxins B1 and G1, and DMDHST for aflatoxins B2 and G2. Next, the versicolorin reductase aflM and the cytochrome P450 monooxygenase aflN are involved in conversion of VERA to demethylsterigmatocystin (DMST). AflX and aflY seem also involved in this step, through probable aflX-mediated epoxide ring-opening step following versicolorin A oxidation and aflY-mediated Baeyer-Villiger oxidation required for the formation of the xanthone ring. The methyltransferase aflO then leads to the modification of DMST to sterigmatocystin (ST), and of DMDHST to dihydrosterigmatocystin (DHST). Both ST and DHST are then substrates of the O-methyltransferase aflP to yield O-methylsterigmatocystin (OMST) and dihydro-O-methylsterigmatocystin (DHOMST), respectively. Finally OMST is converted to aflatoxins B1 and G1, and DHOMST to aflatoxins B2 and G2, via the action of several enzymes including O-methylsterigmatocystin oxidoreductase aflQ, the cytochrome P450 monooxygenase aflU, but also the NADH-dependent flavin oxidoreductase nadA which is specifically required for the synthesis of AFG1. The chain is Oxidoreductase AflY from Aspergillus parasiticus (strain ATCC 56775 / NRRL 5862 / SRRC 143 / SU-1).